The primary structure comprises 370 residues: Spermidine/putrescine import ATP-binding protein PotA (370 aa).

One can recognise an ABC transporter domain in the interval 11 to 241 (IELRSITKSY…PKNLFVAKFI (231 aa)). 43-50 (GPSGCGKT) contacts ATP.

The protein belongs to the ABC transporter superfamily. Spermidine/putrescine importer (TC 3.A.1.11.1) family. As to quaternary structure, the complex is composed of two ATP-binding proteins (PotA), two transmembrane proteins (PotB and PotC) and a solute-binding protein (PotD).

The protein localises to the cell inner membrane. The enzyme catalyses ATP + H2O + polyamine-[polyamine-binding protein]Side 1 = ADP + phosphate + polyamineSide 2 + [polyamine-binding protein]Side 1.. In terms of biological role, part of the ABC transporter complex PotABCD involved in spermidine/putrescine import. Responsible for energy coupling to the transport system. This is Spermidine/putrescine import ATP-binding protein PotA from Pasteurella multocida (strain Pm70).